The sequence spans 67 residues: Conotoxin Lt5.9 (67 aa).

The N-terminal stretch at Met-1 to Pro-19 is a signal peptide. Positions Lys-20–Val-46 are excised as a propeptide.

Belongs to the conotoxin T superfamily. Post-translationally, contains 2 disulfide bonds that can be either 'C1-C3, C2-C4' or 'C1-C4, C2-C3', since these disulfide connectivities have been observed for conotoxins with cysteine framework V (for examples, see AC P0DQQ7 and AC P81755). As to expression, expressed by the venom duct.

Its subcellular location is the secreted. The chain is Conotoxin Lt5.9 from Conus litteratus (Lettered cone).